The primary structure comprises 176 residues: ATP synthase subunit b (176 aa).

A helical membrane pass occupies residues 24–43; sequence FAFRVVNFVIFAGIIWKAAG.

The protein belongs to the ATPase B chain family. In terms of assembly, F-type ATPases have 2 components, F(1) - the catalytic core - and F(0) - the membrane proton channel. F(1) has five subunits: alpha(3), beta(3), gamma(1), delta(1), epsilon(1). F(0) has three main subunits: a(1), b(2) and c(10-14). The alpha and beta chains form an alternating ring which encloses part of the gamma chain. F(1) is attached to F(0) by a central stalk formed by the gamma and epsilon chains, while a peripheral stalk is formed by the delta and b chains.

The protein localises to the cell inner membrane. F(1)F(0) ATP synthase produces ATP from ADP in the presence of a proton or sodium gradient. F-type ATPases consist of two structural domains, F(1) containing the extramembraneous catalytic core and F(0) containing the membrane proton channel, linked together by a central stalk and a peripheral stalk. During catalysis, ATP synthesis in the catalytic domain of F(1) is coupled via a rotary mechanism of the central stalk subunits to proton translocation. Functionally, component of the F(0) channel, it forms part of the peripheral stalk, linking F(1) to F(0). This chain is ATP synthase subunit b, found in Nitratidesulfovibrio vulgaris (strain ATCC 29579 / DSM 644 / CCUG 34227 / NCIMB 8303 / VKM B-1760 / Hildenborough) (Desulfovibrio vulgaris).